The following is a 63-amino-acid chain: Conotoxin Pu5.4 (63 aa).

An N-terminal signal peptide occupies residues 1–22 (MRCVPVFVILLLLIASTPSVDA). Residues 23 to 50 (TQKTKDDMSLASFHDNAKRFLQTLRNTR) constitute a propeptide that is removed on maturation. Trp-62 is subject to Tryptophan amide.

The protein belongs to the conotoxin T superfamily. Post-translationally, contains 2 disulfide bonds that can be either 'C1-C3, C2-C4' or 'C1-C4, C2-C3', since these disulfide connectivities have been observed for conotoxins with cysteine framework V (for examples, see AC P0DQQ7 and AC P81755). In terms of tissue distribution, expressed by the venom duct.

The protein resides in the secreted. The polypeptide is Conotoxin Pu5.4 (Conus pulicarius (Flea-bitten cone)).